A 213-amino-acid chain; its full sequence is Elongation factor 1-beta (213 aa).

Residues 67–80 are compositionally biased toward low complexity; sequence AGKAPAASGSAAAA. Residues 67-88 are disordered; that stretch reads AGKAPAASGSAAAAAEEEDDED.

Belongs to the EF-1-beta/EF-1-delta family. As to quaternary structure, EF-1 is composed of 4 subunits: alpha, beta, delta, and gamma.

In terms of biological role, EF-1-beta and EF-1-delta stimulate the exchange of GDP bound to EF-1-alpha to GTP. The chain is Elongation factor 1-beta (EFB1) from Candida albicans (strain WO-1) (Yeast).